The following is a 164-amino-acid chain: Transcription factor E (164 aa).

One can recognise an HTH TFE/IIEalpha-type domain in the interval 5-87 (NDKVIRGYLL…LWRLDFSDIE (83 aa)).

Belongs to the TFE family. As to quaternary structure, monomer. Interaction with RNA polymerase subunits RpoF and RpoE is necessary for Tfe stimulatory transcription activity. Able to interact with Tbp and RNA polymerase in the absence of DNA promoter. Interacts both with the preinitiation and elongation complexes.

Functionally, transcription factor that plays a role in the activation of archaeal genes transcribed by RNA polymerase. Facilitates transcription initiation by enhancing TATA-box recognition by TATA-box-binding protein (Tbp), and transcription factor B (Tfb) and RNA polymerase recruitment. Not absolutely required for transcription in vitro, but particularly important in cases where Tbp or Tfb function is not optimal. It dynamically alters the nucleic acid-binding properties of RNA polymerases by stabilizing the initiation complex and destabilizing elongation complexes. Seems to translocate with the RNA polymerase following initiation and acts by binding to the non template strand of the transcription bubble in elongation complexes. The sequence is that of Transcription factor E from Methanosarcina barkeri (strain Fusaro / DSM 804).